Consider the following 392-residue polypeptide: Tryptophan synthase beta chain (392 aa).

Residue Lys86 is modified to N6-(pyridoxal phosphate)lysine.

Belongs to the TrpB family. Tetramer of two alpha and two beta chains. Requires pyridoxal 5'-phosphate as cofactor.

It catalyses the reaction (1S,2R)-1-C-(indol-3-yl)glycerol 3-phosphate + L-serine = D-glyceraldehyde 3-phosphate + L-tryptophan + H2O. Its pathway is amino-acid biosynthesis; L-tryptophan biosynthesis; L-tryptophan from chorismate: step 5/5. Its function is as follows. The beta subunit is responsible for the synthesis of L-tryptophan from indole and L-serine. In Methanocorpusculum labreanum (strain ATCC 43576 / DSM 4855 / Z), this protein is Tryptophan synthase beta chain.